We begin with the raw amino-acid sequence, 416 residues long: Lipase A (416 aa).

Residues 1–32 form the signal peptide; the sequence is MRLAPQKPLLLSTVLHLLLSIWMLGFASLAGA. 2 disulfides stabilise this stretch: cysteine 67-cysteine 391 and cysteine 177-cysteine 180. Residue asparagine 179 is glycosylated (N-linked (GlcNAc...) asparagine). The active-site Nucleophile is the serine 219. Active-site charge relay system residues include aspartate 287 and histidine 381.

It belongs to the AB hydrolase superfamily. Lipase family. Post-translationally, glycosylated.

The protein localises to the secreted. It catalyses the reaction Deacetylation of xylans and xylo-oligosaccharides.. The catalysed reaction is a triacylglycerol + H2O = a diacylglycerol + a fatty acid + H(+). Lipolytic enzyme that possesses both lipase and acetylxylan esterase activity. Active towards p-nitrophenol esters of various carbon chain length with preference for medium-chain fatty acids (C-8). Also highly active on the acetylated compounds xylose tetra-acetate and oat spelt xylan. The polypeptide is Lipase A (Sodiomyces alcalophilus (Acremonium alcalophilum)).